The primary structure comprises 214 residues: Large ribosomal subunit protein uL16 (214 aa).

Position 32 is a citrulline (Arg-32). Lys-175 is covalently cross-linked (Glycyl lysine isopeptide (Lys-Gly) (interchain with G-Cter in SUMO2)). Lys-188 is covalently cross-linked (Glycyl lysine isopeptide (Lys-Gly) (interchain with G-Cter in ubiquitin)).

This sequence belongs to the universal ribosomal protein uL16 family. Component of the large ribosomal subunit. Mature ribosomes consist of a small (40S) and a large (60S) subunit. The 40S subunit contains about 33 different proteins and 1 molecule of RNA (18S). The 60S subunit contains about 49 different proteins and 3 molecules of RNA (28S, 5.8S and 5S). Post-translationally, citrullinated by PADI4. In terms of processing, ufmylated by UFL1.

It is found in the cytoplasm. Component of the large ribosomal subunit. Plays a role in the formation of actively translating ribosomes. May play a role in the embryonic brain development. This chain is Large ribosomal subunit protein uL16, found in Pongo abelii (Sumatran orangutan).